Consider the following 385-residue polypeptide: Selenoprotein P (385 aa).

An N-terminal signal peptide occupies residues 1-19 (MWRSLGLALALCLLPYGGA). Position 59 (selenocysteine 59) is a non-standard amino acid, selenocysteine. The segment at residues 59–62 (UYLC) is a cross-link (cysteinyl-selenocysteine (Sec-Cys); in isoform Se-P1). N-linked (GlcNAc...) asparagine glycosylation is found at asparagine 83, asparagine 174, and asparagine 188. Cystine bridges form between cysteine 168–cysteine 186 and cysteine 172–cysteine 175. A disordered region spans residues 196–262 (KTTEPSEEHN…KGQHRQGHLE (67 aa)). Positions 243 to 258 (LHHHHHHHKHKGQHRQ) are enriched in basic residues. Selenocysteine 264 is a non-standard amino acid (selenocysteine). Phosphoserine is present on serine 269. Non-standard amino acids (selenocysteine) are located at selenocysteine 282, selenocysteine 323, selenocysteine 335, and selenocysteine 357. Positions 357–385 (UHSQHVSPTEASPNUSUNNKTKKUKUNLN) are disordered. Residues 360–369 (QHVSPTEASP) are compositionally biased toward polar residues. O-linked (Hex...) threonine; partial glycosylation is present at threonine 365. Residues selenocysteine 371, selenocysteine 373, selenocysteine 380, and selenocysteine 382 are each a non-standard amino acid (selenocysteine). The segment covering 376–385 (KTKKUKUNLN) has biased composition (basic residues).

The protein belongs to the selenoprotein P family. Post-translationally, isoform Se-P1 contains several disulfide bridges and a selenide-sulfide bond between Sec-59 and Cys-62. These bonds are speculated to serve as redox-active pairs. In terms of processing, phosphorylation sites are present in the extracellular medium. Widely expressed, mainly by the liver. Secreted in plasma.

Its subcellular location is the secreted. Its function is as follows. Might be responsible for some of the extracellular antioxidant defense properties of selenium or might be involved in the transport of selenium. May supply selenium to tissues such as brain and testis. In Rattus norvegicus (Rat), this protein is Selenoprotein P.